The sequence spans 160 residues: Regulatory protein RecX (160 aa).

The protein belongs to the RecX family.

It is found in the cytoplasm. Modulates RecA activity. The sequence is that of Regulatory protein RecX from Pelodictyon phaeoclathratiforme (strain DSM 5477 / BU-1).